The primary structure comprises 211 residues: MYQPDFPTVPFRLGLYPVVDSVQWIERLLEAGVRTIQLRIKDKRDEEVEADIIAAIALGRRYDARLFINDYWRLAIKHRAYGVHLGQEDLETTDLEAIQAAGLRLGVSTHDDMEIDIALAAKPSYIALGHVFPTQTKQMPSAPQGLAQLASHIERLADYPTVAIGGISLERAPSVLATGVGSIAVVSAITQAADWRAATAQLLDIAGVGDE.

4-amino-2-methyl-5-(diphosphooxymethyl)pyrimidine contacts are provided by residues 37-41 (QLRIK) and Asn69. 2 residues coordinate Mg(2+): Asp70 and Asp89. Ser108 contributes to the 4-amino-2-methyl-5-(diphosphooxymethyl)pyrimidine binding site. 134 to 136 (TQT) provides a ligand contact to 2-[(2R,5Z)-2-carboxy-4-methylthiazol-5(2H)-ylidene]ethyl phosphate. Lys137 is a binding site for 4-amino-2-methyl-5-(diphosphooxymethyl)pyrimidine. Residues Gly166 and 186 to 187 (VS) each bind 2-[(2R,5Z)-2-carboxy-4-methylthiazol-5(2H)-ylidene]ethyl phosphate.

Belongs to the thiamine-phosphate synthase family. Mg(2+) serves as cofactor.

The catalysed reaction is 2-[(2R,5Z)-2-carboxy-4-methylthiazol-5(2H)-ylidene]ethyl phosphate + 4-amino-2-methyl-5-(diphosphooxymethyl)pyrimidine + 2 H(+) = thiamine phosphate + CO2 + diphosphate. The enzyme catalyses 2-(2-carboxy-4-methylthiazol-5-yl)ethyl phosphate + 4-amino-2-methyl-5-(diphosphooxymethyl)pyrimidine + 2 H(+) = thiamine phosphate + CO2 + diphosphate. It carries out the reaction 4-methyl-5-(2-phosphooxyethyl)-thiazole + 4-amino-2-methyl-5-(diphosphooxymethyl)pyrimidine + H(+) = thiamine phosphate + diphosphate. Its pathway is cofactor biosynthesis; thiamine diphosphate biosynthesis; thiamine phosphate from 4-amino-2-methyl-5-diphosphomethylpyrimidine and 4-methyl-5-(2-phosphoethyl)-thiazole: step 1/1. Its function is as follows. Condenses 4-methyl-5-(beta-hydroxyethyl)thiazole monophosphate (THZ-P) and 2-methyl-4-amino-5-hydroxymethyl pyrimidine pyrophosphate (HMP-PP) to form thiamine monophosphate (TMP). This is Thiamine-phosphate synthase from Salmonella schwarzengrund (strain CVM19633).